We begin with the raw amino-acid sequence, 188 residues long: Photosystem I assembly protein Ycf4 (188 aa).

A run of 2 helical transmembrane segments spans residues Ile26 to Ser46 and Leu70 to Leu90.

It belongs to the Ycf4 family.

Its subcellular location is the cellular thylakoid membrane. Functionally, seems to be required for the assembly of the photosystem I complex. The polypeptide is Photosystem I assembly protein Ycf4 (Rippkaea orientalis (strain PCC 8801 / RF-1) (Cyanothece sp. (strain PCC 8801))).